Consider the following 893-residue polypeptide: UPF0182 protein CLD_0809 (893 aa).

Helical transmembrane passes span 9–29 (IPLFIIILFIAFFNKIINFII), 49–69 (AIIILMIPIFIIFFISIWMYY), 94–114 (LFFIFNFIVSIFLAYIFSSSY), 154–174 (VIISLLLFLVITTFIAYFILE), 202–222 (LAIVSGLIILFISFGHLIKIW), 246–266 (FYKIIVVITLISSIVTLLSIV), and 273–293 (VSICIGITIFLIVSQNIASFL).

Belongs to the UPF0182 family.

The protein localises to the cell membrane. This is UPF0182 protein CLD_0809 from Clostridium botulinum (strain Okra / Type B1).